The sequence spans 201 residues: Ribonuclease HII (201 aa).

Residues glutamine 15–alanine 201 enclose the RNase H type-2 domain. Positions 21, 22, and 113 each coordinate a divalent metal cation.

It belongs to the RNase HII family. Mn(2+) is required as a cofactor. Mg(2+) serves as cofactor.

It localises to the cytoplasm. The enzyme catalyses Endonucleolytic cleavage to 5'-phosphomonoester.. Its function is as follows. Endonuclease that specifically degrades the RNA of RNA-DNA hybrids. The sequence is that of Ribonuclease HII from Nitrosococcus oceani (strain ATCC 19707 / BCRC 17464 / JCM 30415 / NCIMB 11848 / C-107).